The chain runs to 158 residues: MVSYNVLTKLFFIFSGGLVFFFFEFFLNHFNYYPTKLLYYITFYFIKNHPSLFLLFNFFLSTASFSYSFPSKSHLTFYSKGAPSVFFLSLKSSPCPGYCSSTLLYSTSNLLPSLPSPLHAPPPLGSRLLHVFFYRRSNASAYPSFTPRYSFFPSFTLR.

Helical transmembrane passes span 10 to 30 (LFFIFSGGLVFFFFEFFLNHF) and 40 to 60 (YITFYFIKNHPSLFLLFNFFL).

It is found in the membrane. This is an uncharacterized protein from Schizosaccharomyces pombe (strain 972 / ATCC 24843) (Fission yeast).